We begin with the raw amino-acid sequence, 334 residues long: tRNA N6-adenosine threonylcarbamoyltransferase (334 aa).

Fe cation is bound by residues His112 and His116. Substrate-binding positions include 135-139, Asp168, Gly181, Asp185, and Asn274; that span reads VVSGG. Asp303 is a Fe cation binding site.

This sequence belongs to the KAE1 / TsaD family. It depends on Fe(2+) as a cofactor.

It is found in the cytoplasm. It catalyses the reaction L-threonylcarbamoyladenylate + adenosine(37) in tRNA = N(6)-L-threonylcarbamoyladenosine(37) in tRNA + AMP + H(+). Its function is as follows. Required for the formation of a threonylcarbamoyl group on adenosine at position 37 (t(6)A37) in tRNAs that read codons beginning with adenine. Is involved in the transfer of the threonylcarbamoyl moiety of threonylcarbamoyl-AMP (TC-AMP) to the N6 group of A37, together with TsaE and TsaB. TsaD likely plays a direct catalytic role in this reaction. The chain is tRNA N6-adenosine threonylcarbamoyltransferase from Anaeromyxobacter dehalogenans (strain 2CP-1 / ATCC BAA-258).